A 129-amino-acid chain; its full sequence is RxLR effector protein PexRD43 (129 aa).

Positions 1–16 are cleaved as a signal peptide; that stretch reads MRLAMILLSIPLFVSG. Residues 44-56 carry the RxLR-dEER motif; it reads RSLRTSGEANEER.

The protein belongs to the RxLR effector family.

It is found in the secreted. The protein resides in the host cytoplasm. The protein localises to the host nucleus. In terms of biological role, effector that enhances P.infestans colonization of Nicotiana benthamiana leaves. The protein is RxLR effector protein PexRD43 of Phytophthora infestans (strain T30-4) (Potato late blight agent).